A 123-amino-acid polypeptide reads, in one-letter code: Small ribosomal subunit protein uS12 (123 aa).

Residue Asp89 is modified to 3-methylthioaspartic acid.

This sequence belongs to the universal ribosomal protein uS12 family. In terms of assembly, part of the 30S ribosomal subunit. Contacts proteins S8 and S17. May interact with IF1 in the 30S initiation complex.

Its function is as follows. With S4 and S5 plays an important role in translational accuracy. Functionally, interacts with and stabilizes bases of the 16S rRNA that are involved in tRNA selection in the A site and with the mRNA backbone. Located at the interface of the 30S and 50S subunits, it traverses the body of the 30S subunit contacting proteins on the other side and probably holding the rRNA structure together. The combined cluster of proteins S8, S12 and S17 appears to hold together the shoulder and platform of the 30S subunit. In Brucella anthropi (strain ATCC 49188 / DSM 6882 / CCUG 24695 / JCM 21032 / LMG 3331 / NBRC 15819 / NCTC 12168 / Alc 37) (Ochrobactrum anthropi), this protein is Small ribosomal subunit protein uS12.